A 288-amino-acid chain; its full sequence is Mortality factor 4-like protein 2 (288 aa).

Over residues 1-15 the composition is skewed to polar residues; sequence MSSRKQASQTRGQQS. The segment at 1-115 is disordered; sequence MSSRKQASQT…DPTVESEEAF (115 aa). Ser71 bears the Phosphoserine mark. The MRG domain occupies 117-288; sequence SRMEVKVKIP…ASADYHRKAL (172 aa).

Component of the NuA4 histone acetyltransferase complex which contains the catalytic subunit KAT5/TIP60 and the subunits EP400, TRRAP/PAF400, BRD8/SMAP, EPC1, DMAP1/DNMAP1, RUVBL1/TIP49, RUVBL2, ING3, actin, ACTL6A/BAF53A, MORF4L1/MRG15, MORF4L2/MRGX, MRGBP, YEATS4/GAS41 and VPS72/YL1. The NuA4 complex interacts with MYC and the adenovirus E1A protein. MORF4L1 may also participate in the formation of NuA4 related complexes which lack the KAT5/TIP60 catalytic subunit, but which include the SWI/SNF related protein SRCAP. Component of the MSIN3A histone deacetylase complex, which includes SIN3A, HDAC2, ARID4B, MORF4L1, RBBP4/RbAp48, and RBBP7/RbAp46. Interacts with MRFAP1 and RB1. May also interact with one or more as yet undefined members of the TLE (transducin-like enhancer of split) family of transcriptional repressors.

The protein resides in the nucleus. In terms of biological role, component of the NuA4 histone acetyltransferase complex which is involved in transcriptional activation of select genes principally by acetylation of nucleosomal histone H4 and H2A. This modification may both alter nucleosome - DNA interactions and promote interaction of the modified histones with other proteins which positively regulate transcription. This complex may be required for the activation of transcriptional programs associated with oncogene and proto-oncogene mediated growth induction, tumor suppressor mediated growth arrest and replicative senescence, apoptosis, and DNA repair. The NuA4 complex ATPase and helicase activities seem to be, at least in part, contributed by the association of RUVBL1 and RUVBL2 with EP400. NuA4 may also play a direct role in DNA repair when directly recruited to sites of DNA damage. Also a component of the MSIN3A complex which acts to repress transcription by deacetylation of nucleosomal histones. The sequence is that of Mortality factor 4-like protein 2 (Morf4l2) from Mus musculus (Mouse).